The sequence spans 270 residues: Hydroxyethylthiazole kinase (270 aa).

Position 44 (Met44) interacts with substrate. Residues Arg119 and Thr165 each contribute to the ATP site. Gly192 serves as a coordination point for substrate.

This sequence belongs to the Thz kinase family. Mg(2+) serves as cofactor.

It catalyses the reaction 5-(2-hydroxyethyl)-4-methylthiazole + ATP = 4-methyl-5-(2-phosphooxyethyl)-thiazole + ADP + H(+). Its pathway is cofactor biosynthesis; thiamine diphosphate biosynthesis; 4-methyl-5-(2-phosphoethyl)-thiazole from 5-(2-hydroxyethyl)-4-methylthiazole: step 1/1. In terms of biological role, catalyzes the phosphorylation of the hydroxyl group of 4-methyl-5-beta-hydroxyethylthiazole (THZ). The polypeptide is Hydroxyethylthiazole kinase (Corynebacterium efficiens (strain DSM 44549 / YS-314 / AJ 12310 / JCM 11189 / NBRC 100395)).